Consider the following 125-residue polypeptide: Large ribosomal subunit protein bL12 (125 aa).

It belongs to the bacterial ribosomal protein bL12 family. As to quaternary structure, homodimer. Part of the ribosomal stalk of the 50S ribosomal subunit. Forms a multimeric L10(L12)X complex, where L10 forms an elongated spine to which 2 to 4 L12 dimers bind in a sequential fashion. Binds GTP-bound translation factors.

Forms part of the ribosomal stalk which helps the ribosome interact with GTP-bound translation factors. Is thus essential for accurate translation. The polypeptide is Large ribosomal subunit protein bL12 (Campylobacter curvus (strain 525.92)).